The following is a 195-amino-acid chain: HTH-type transcriptional regulator BetI (195 aa).

The HTH tetR-type domain occupies 8–68 (EIRRAQLIDA…ATMRHVLRDL (61 aa)). Positions 31 to 50 (TLASVAQRANISTGIVSHYF) form a DNA-binding region, H-T-H motif.

The protein operates within amine and polyamine biosynthesis; betaine biosynthesis via choline pathway [regulation]. Repressor involved in the biosynthesis of the osmoprotectant glycine betaine. It represses transcription of the choline transporter BetT and the genes of BetAB involved in the synthesis of glycine betaine. This chain is HTH-type transcriptional regulator BetI, found in Burkholderia thailandensis (strain ATCC 700388 / DSM 13276 / CCUG 48851 / CIP 106301 / E264).